The following is a 328-amino-acid chain: Phosphate acyltransferase (328 aa).

It belongs to the PlsX family. Homodimer. Probably interacts with PlsY.

Its subcellular location is the cytoplasm. It carries out the reaction a fatty acyl-[ACP] + phosphate = an acyl phosphate + holo-[ACP]. It participates in lipid metabolism; phospholipid metabolism. Its function is as follows. Catalyzes the reversible formation of acyl-phosphate (acyl-PO(4)) from acyl-[acyl-carrier-protein] (acyl-ACP). This enzyme utilizes acyl-ACP as fatty acyl donor, but not acyl-CoA. The polypeptide is Phosphate acyltransferase (Campylobacter jejuni (strain RM1221)).